We begin with the raw amino-acid sequence, 259 residues long: MNIKRRLKYLTSCLLVSAFFWINSSAWAGGPEIPPSAPWVIYLGGFGGIYVANFEYQGTYLGGSFTVPIGSNVHQNGYTAGGHIGLRYYFSNPWFLGLEFAAMGNSENATTAESVLAPSPDDLIFNLVNQFRIKSNLDLTAQLGVNITPQTRVYIKGGASYARIRHILTVFNPATLTPTISLQRTTHKNRWGFLVGFGLGYDFCPWFGIFTEYNYYDYGRVGLDSLSNIRPNNGADTYHQNVRVHAYSVLLGVNLNFSV.

An N-terminal signal peptide occupies residues 1 to 28; that stretch reads MNIKRRLKYLTSCLLVSAFFWINSSAWA. The next 2 helical transmembrane spans lie at 32 to 52 and 191 to 211; these read EIPP…IYVA and WGFL…GIFT.

The protein resides in the cell membrane. This is an uncharacterized protein from Coxiella burnetii (strain RSA 493 / Nine Mile phase I).